A 105-amino-acid polypeptide reads, in one-letter code: Small ribosomal subunit protein uS10 (105 aa).

The protein belongs to the universal ribosomal protein uS10 family. In terms of assembly, part of the 30S ribosomal subunit.

In terms of biological role, involved in the binding of tRNA to the ribosomes. The polypeptide is Small ribosomal subunit protein uS10 (Solidesulfovibrio magneticus (strain ATCC 700980 / DSM 13731 / RS-1) (Desulfovibrio magneticus)).